A 177-amino-acid polypeptide reads, in one-letter code: Thymidine kinase (177 aa).

11 to 18 (GPMLSGKS) is an ATP binding site. Glutamate 83 (proton acceptor) is an active-site residue. Residue phenylalanine 113 coordinates substrate. Cysteine 138 and cysteine 141 together coordinate Zn(2+). Position 157–161 (157–161 (IEIIG)) interacts with substrate. Zn(2+) is bound by residues cysteine 170 and cysteine 173.

The protein belongs to the thymidine kinase family. As to quaternary structure, homotetramer. Two molecules of substrate bind to each enzyme tetramer.

It catalyses the reaction thymidine + ATP = dTMP + ADP + H(+). Functionally, phosphorylates thymidine and thymidine analogs, such as azidothymidine (AZT). Part of the salvage pathway for pyrimidine deoxyribonucleotide synthesis. The sequence is that of Thymidine kinase (OPG101) from Monkeypox virus (strain Zaire-96-I-16) (MPX).